A 212-amino-acid chain; its full sequence is Thymidine kinase (212 aa).

ATP is bound by residues 16–23 and 99–102; these read GPMFSGKS and DEAQ. The Proton acceptor role is filled by glutamate 100.

Belongs to the thymidine kinase family. In terms of assembly, homotetramer.

It localises to the cytoplasm. The enzyme catalyses thymidine + ATP = dTMP + ADP + H(+). This Deinococcus radiodurans (strain ATCC 13939 / DSM 20539 / JCM 16871 / CCUG 27074 / LMG 4051 / NBRC 15346 / NCIMB 9279 / VKM B-1422 / R1) protein is Thymidine kinase.